Reading from the N-terminus, the 553-residue chain is MSEGDAYEDFMMSEDEEMHYAEMEEDSDEMGVYEEETSQGAEEEVPLDPSSSIVEGRYYRAKGLKENSKFREAIEALEGVATSSEPLWAFRALKQIAKCWNFKGAQASEGYQDGVRTALVRLLEHGLRWRQKLGAAYVERSLISTLRMLVPANSQNFVFDEAHEICLPTIEFHLRLLDAVAPLPGDFKDLCTLHMQLRLENLIWRERLRGADCTAILSEAPAPQLTAETLLLLLQCHICRFLRLCQPPAQQFAELVSELQDRAERSLALAQQPHAMVLLAFAQCMRGMQQQPQPHSALRTHFSACLQGLEEIGSNSSFFRDLNLCGFVLADALAYSAGRCSHRVDPFALEQIRILRETPIVHNLQLLYESYVALDLPSFARALDLLAPFRSALAPLFARLCALARERKLWDAIAPLHSCIALADIQRLLCIGSSSLSRDSLLTLMMQGVMASSARVPFRLDLTRDYVYFGDEPRVQLRAPAARPGLRHCAHDLGLTSACARPFQGSSALQLMDCLSEHRNRAASAAADPADAVCRARQPLAAYRTLAALILDE.

The segment covering 21 to 46 has biased composition (acidic residues); it reads AEMEEDSDEMGVYEEETSQGAEEEVP. The interval 21-47 is disordered; that stretch reads AEMEEDSDEMGVYEEETSQGAEEEVPL. Residues 298–474 form the PCI domain; that stretch reads LRTHFSACLQ…DYVYFGDEPR (177 aa).

As to quaternary structure, component of a COP9 signalosome-like (CSN) complex.

It is found in the cytoplasm. The protein localises to the nucleus. Its function is as follows. Component of the COP9 signalosome (CSN) complex that acts as an regulator of the ubiquitin (Ubl) conjugation pathway by mediating the deneddylation of the cullin subunit of SCF-type E3 ubiquitin-protein ligase complexes. The CSN complex is involved in the regulation of the mating pheromone response. In Eremothecium gossypii (strain ATCC 10895 / CBS 109.51 / FGSC 9923 / NRRL Y-1056) (Yeast), this protein is COP9 signalosome complex subunit 10 (RRI2).